The primary structure comprises 135 residues: Interleukin-4 (135 aa).

An N-terminal signal peptide occupies residues 1-24; the sequence is MGLTSQLIPALVCLLVCTSHFVHG. Disulfide bonds link C27–C135, C48–C85, and C70–C105. 2 N-linked (GlcNAc...) asparagine glycosylation sites follow: N62 and N96.

This sequence belongs to the IL-4/IL-13 family.

The protein resides in the secreted. Participates in at least several B-cell activation processes as well as of other cell types. It is a costimulator of DNA-synthesis. It induces the expression of class II MHC molecules on resting B-cells. It enhances both secretion and cell surface expression of IgE and IgG1. It also regulates the expression of the low affinity Fc receptor for IgE (CD23) on both lymphocytes and monocytes. Positively regulates IL31RA expression in macrophages. Stimulates autophagy in dendritic cells by interfering with mTORC1 signaling and through the induction of RUFY4. This chain is Interleukin-4 (IL4), found in Capra hircus (Goat).